The primary structure comprises 201 residues: Small ribosomal subunit protein uS4c (201 aa).

Positions 17–44 (ALPGLTNKKPRTGSDLRNQSRSGKKSQY) are disordered. In terms of domain architecture, S4 RNA-binding spans 89 to 149 (MRLDNILFRL…DEQKSRALIQ (61 aa)).

Belongs to the universal ribosomal protein uS4 family. Part of the 30S ribosomal subunit. Contacts protein S5. The interaction surface between S4 and S5 is involved in control of translational fidelity.

The protein resides in the plastid. The protein localises to the chloroplast. Its function is as follows. One of the primary rRNA binding proteins, it binds directly to 16S rRNA where it nucleates assembly of the body of the 30S subunit. In terms of biological role, with S5 and S12 plays an important role in translational accuracy. The sequence is that of Small ribosomal subunit protein uS4c (rps4) from Atropa belladonna (Belladonna).